The following is a 268-amino-acid chain: 3-deoxy-manno-octulosonate cytidylyltransferase (268 aa).

This sequence belongs to the KdsB family.

Its subcellular location is the cytoplasm. The enzyme catalyses 3-deoxy-alpha-D-manno-oct-2-ulosonate + CTP = CMP-3-deoxy-beta-D-manno-octulosonate + diphosphate. Its pathway is nucleotide-sugar biosynthesis; CMP-3-deoxy-D-manno-octulosonate biosynthesis; CMP-3-deoxy-D-manno-octulosonate from 3-deoxy-D-manno-octulosonate and CTP: step 1/1. It functions in the pathway bacterial outer membrane biogenesis; lipopolysaccharide biosynthesis. In terms of biological role, activates KDO (a required 8-carbon sugar) for incorporation into bacterial lipopolysaccharide in Gram-negative bacteria. The chain is 3-deoxy-manno-octulosonate cytidylyltransferase from Ralstonia nicotianae (strain ATCC BAA-1114 / GMI1000) (Ralstonia solanacearum).